Reading from the N-terminus, the 135-residue chain is Large ribosomal subunit protein bL12c (135 aa).

This sequence belongs to the bacterial ribosomal protein bL12 family. Homodimer. Part of the ribosomal stalk of the 50S ribosomal subunit. Forms a multimeric L10(L12)X complex, where L10 forms an elongated spine to which 2 to 4 L12 dimers bind in a sequential fashion. Binds GTP-bound translation factors.

It localises to the plastid. The protein localises to the chloroplast. Its function is as follows. Forms part of the ribosomal stalk which helps the ribosome interact with GTP-bound translation factors. Is thus essential for accurate translation. This Chara vulgaris (Common stonewort) protein is Large ribosomal subunit protein bL12c.